We begin with the raw amino-acid sequence, 392 residues long: Formate-dependent phosphoribosylglycinamide formyltransferase (392 aa).

N(1)-(5-phospho-beta-D-ribosyl)glycinamide is bound by residues 12-13 (EL) and Glu72. ATP is bound by residues Arg104, Lys145, 150-155 (SSGKGQ), 185-188 (EAFV), and Glu193. Positions 109 to 300 (DLAARDLGLR…EFELHARAVL (192 aa)) constitute an ATP-grasp domain. 2 residues coordinate Mg(2+): Glu258 and Glu270. Residues Asp277, Lys348, and 355-356 (RR) each bind N(1)-(5-phospho-beta-D-ribosyl)glycinamide.

It belongs to the PurK/PurT family. In terms of assembly, homodimer.

It catalyses the reaction N(1)-(5-phospho-beta-D-ribosyl)glycinamide + formate + ATP = N(2)-formyl-N(1)-(5-phospho-beta-D-ribosyl)glycinamide + ADP + phosphate + H(+). The protein operates within purine metabolism; IMP biosynthesis via de novo pathway; N(2)-formyl-N(1)-(5-phospho-D-ribosyl)glycinamide from N(1)-(5-phospho-D-ribosyl)glycinamide (formate route): step 1/1. Its function is as follows. Involved in the de novo purine biosynthesis. Catalyzes the transfer of formate to 5-phospho-ribosyl-glycinamide (GAR), producing 5-phospho-ribosyl-N-formylglycinamide (FGAR). Formate is provided by PurU via hydrolysis of 10-formyl-tetrahydrofolate. The sequence is that of Formate-dependent phosphoribosylglycinamide formyltransferase from Chlorobaculum tepidum (strain ATCC 49652 / DSM 12025 / NBRC 103806 / TLS) (Chlorobium tepidum).